The primary structure comprises 450 residues: mRNA cleavage and polyadenylation factor CLP1 (450 aa).

ATP-binding positions include glutamate 29, lysine 67, and 137 to 142 (NSGKTS).

Belongs to the Clp1 family. Clp1 subfamily. In terms of assembly, component of a pre-mRNA cleavage factor complex. Interacts directly with PCF11.

The protein resides in the nucleus. Its function is as follows. Required for endonucleolytic cleavage during polyadenylation-dependent pre-mRNA 3'-end formation. This is mRNA cleavage and polyadenylation factor CLP1 from Yarrowia lipolytica (strain CLIB 122 / E 150) (Yeast).